We begin with the raw amino-acid sequence, 212 residues long: Thiamine-phosphate synthase (212 aa).

4-amino-2-methyl-5-(diphosphooxymethyl)pyrimidine contacts are provided by residues glutamine 41–lysine 45 and aspartate 76. Aspartate 77 and aspartate 96 together coordinate Mg(2+). Serine 114 contacts 4-amino-2-methyl-5-(diphosphooxymethyl)pyrimidine. A 2-[(2R,5Z)-2-carboxy-4-methylthiazol-5(2H)-ylidene]ethyl phosphate-binding site is contributed by threonine 141–serine 143. Lysine 144 contacts 4-amino-2-methyl-5-(diphosphooxymethyl)pyrimidine. 2-[(2R,5Z)-2-carboxy-4-methylthiazol-5(2H)-ylidene]ethyl phosphate-binding positions include glycine 172 and isoleucine 192–serine 193.

This sequence belongs to the thiamine-phosphate synthase family. Mg(2+) serves as cofactor.

The enzyme catalyses 2-[(2R,5Z)-2-carboxy-4-methylthiazol-5(2H)-ylidene]ethyl phosphate + 4-amino-2-methyl-5-(diphosphooxymethyl)pyrimidine + 2 H(+) = thiamine phosphate + CO2 + diphosphate. It carries out the reaction 2-(2-carboxy-4-methylthiazol-5-yl)ethyl phosphate + 4-amino-2-methyl-5-(diphosphooxymethyl)pyrimidine + 2 H(+) = thiamine phosphate + CO2 + diphosphate. The catalysed reaction is 4-methyl-5-(2-phosphooxyethyl)-thiazole + 4-amino-2-methyl-5-(diphosphooxymethyl)pyrimidine + H(+) = thiamine phosphate + diphosphate. It participates in cofactor biosynthesis; thiamine diphosphate biosynthesis; thiamine phosphate from 4-amino-2-methyl-5-diphosphomethylpyrimidine and 4-methyl-5-(2-phosphoethyl)-thiazole: step 1/1. Functionally, condenses 4-methyl-5-(beta-hydroxyethyl)thiazole monophosphate (THZ-P) and 2-methyl-4-amino-5-hydroxymethyl pyrimidine pyrophosphate (HMP-PP) to form thiamine monophosphate (TMP). This chain is Thiamine-phosphate synthase, found in Leuconostoc citreum (strain KM20).